A 487-amino-acid chain; its full sequence is MTTQPEQIDLSRTHMVGIGGAGMSGIARILLARGYSVTGSDMKDSRSVLALRAAGAEVAIGHDAANVTGGAELPTVVVTSFAAIPKDNPELTAAREAGIPIVRRSDVLAELMSDRRAFLLAGTHGKTSTTSMAVVGVQAAGLDPSFAIGGQLNRAGTNAHHGTGEIFIAEADESDGSFLSYSPEVAVITNIEPDHLDYYGTEEAYVAIFDEFATKVTPGGYLVCCLDDPGAAALAARVRAAGTAPTVLGYGSRAAADQHPDIPAAAIIEEMIPDARGTAAKVRFNLPGQEERYEDIRVAIPGAHMTLNGVAAITGGALLGADLEKVIAGVADFDGVRRRFEYHGEAGGVRVYDDYAHHPTEVTAVLTAAKELVEATDAGRIIAVFQPHLYSRTMNFASEFARALSLADEVVLLDIFGAREQPVEGVDSRIIGEKLTCEWHFQPDFSAVAEQVIGIAKPGDVVLTIGAGTVTMLADEILRCGREAQGE.

122–128 (GTHGKTS) contacts ATP.

This sequence belongs to the MurCDEF family.

It is found in the cytoplasm. The catalysed reaction is UDP-N-acetyl-alpha-D-muramate + L-alanine + ATP = UDP-N-acetyl-alpha-D-muramoyl-L-alanine + ADP + phosphate + H(+). The protein operates within cell wall biogenesis; peptidoglycan biosynthesis. Functionally, cell wall formation. This is UDP-N-acetylmuramate--L-alanine ligase from Corynebacterium urealyticum (strain ATCC 43042 / DSM 7109).